A 150-amino-acid chain; its full sequence is 3-dehydroquinate dehydratase (150 aa).

The active-site Proton acceptor is Tyr-22. Substrate is bound by residues Asn-73, His-79, and Asp-86. Catalysis depends on His-99, which acts as the Proton donor. Substrate-binding positions include 100-101 (LT) and Arg-110.

It belongs to the type-II 3-dehydroquinase family. In terms of assembly, homododecamer.

The catalysed reaction is 3-dehydroquinate = 3-dehydroshikimate + H2O. The protein operates within metabolic intermediate biosynthesis; chorismate biosynthesis; chorismate from D-erythrose 4-phosphate and phosphoenolpyruvate: step 3/7. In terms of biological role, catalyzes a trans-dehydration via an enolate intermediate. The polypeptide is 3-dehydroquinate dehydratase (Desulforudis audaxviator (strain MP104C)).